A 404-amino-acid polypeptide reads, in one-letter code: Homoserine O-succinyltransferase (404 aa).

Over residues 1-25 (MTDIQADPAVTAADAAQADTSSPTA) the composition is skewed to low complexity. Positions 1–30 (MTDIQADPAVTAADAAQADTSSPTAHQGKP) are disordered. In terms of domain architecture, AB hydrolase-1 spans 75 to 384 (NAVLICHALN…HGHDAFLLED (310 aa)). Catalysis depends on Ser-179, which acts as the Nucleophile. Arg-249 is a binding site for substrate. Active-site residues include Asp-344 and His-377. Substrate is bound at residue Asp-378.

It belongs to the AB hydrolase superfamily. MetX family. Homodimer.

The protein resides in the cytoplasm. The catalysed reaction is L-homoserine + succinyl-CoA = O-succinyl-L-homoserine + CoA. It functions in the pathway amino-acid biosynthesis; L-methionine biosynthesis via de novo pathway; O-succinyl-L-homoserine from L-homoserine: step 1/1. Functionally, transfers a succinyl group from succinyl-CoA to L-homoserine, forming succinyl-L-homoserine. This chain is Homoserine O-succinyltransferase, found in Ralstonia pickettii (strain 12J).